Reading from the N-terminus, the 156-residue chain is Deoxyuridine 5'-triphosphate nucleotidohydrolase (156 aa).

Substrate contacts are provided by residues 76 to 78 (RSG), asparagine 89, 93 to 95 (TVD), and lysine 103.

The protein belongs to the dUTPase family. The cofactor is Mg(2+).

It carries out the reaction dUTP + H2O = dUMP + diphosphate + H(+). It functions in the pathway pyrimidine metabolism; dUMP biosynthesis; dUMP from dCTP (dUTP route): step 2/2. This enzyme is involved in nucleotide metabolism: it produces dUMP, the immediate precursor of thymidine nucleotides and it decreases the intracellular concentration of dUTP so that uracil cannot be incorporated into DNA. The chain is Deoxyuridine 5'-triphosphate nucleotidohydrolase from Rhizobium rhizogenes (strain K84 / ATCC BAA-868) (Agrobacterium radiobacter).